The chain runs to 107 residues: Nucleoid-associated protein mlr5504 (107 aa).

Belongs to the YbaB/EbfC family. In terms of assembly, homodimer.

The protein resides in the cytoplasm. Its subcellular location is the nucleoid. Binds to DNA and alters its conformation. May be involved in regulation of gene expression, nucleoid organization and DNA protection. The polypeptide is Nucleoid-associated protein mlr5504 (Mesorhizobium japonicum (strain LMG 29417 / CECT 9101 / MAFF 303099) (Mesorhizobium loti (strain MAFF 303099))).